The following is a 256-amino-acid chain: UPF0644 protein PB2B4.06 (256 aa).

Residues 34-56 (GVVYAGVSGTCAAAGYMFGNFVM) traverse the membrane as a helical segment.

Belongs to the UPF0644 family.

It localises to the mitochondrion membrane. The protein is UPF0644 protein PB2B4.06 of Schizosaccharomyces pombe (strain 972 / ATCC 24843) (Fission yeast).